The following is a 125-amino-acid chain: Steroid Delta-isomerase (125 aa).

Tyrosine 14 functions as the Proton donor in the catalytic mechanism. The Proton acceptor role is filled by aspartate 38. Residue aspartate 99 participates in substrate binding.

As to quaternary structure, homodimer.

It catalyses the reaction a 3-oxo-Delta(5)-steroid = a 3-oxo-Delta(4)-steroid. In Comamonas testosteroni (Pseudomonas testosteroni), this protein is Steroid Delta-isomerase (ksi).